Here is a 333-residue protein sequence, read N- to C-terminus: Endo-1,4-beta-xylanase (333 aa).

A signal peptide spans 1–17 (MYLVAFMLLAILPTGYC). In terms of domain architecture, GH10 spans 18–330 (QLNTLAVRAG…KPAYQGIVDG (313 aa)). Glu-147 functions as the Proton donor in the catalytic mechanism. The active-site Nucleophile is Glu-252.

This sequence belongs to the glycosyl hydrolase 10 (cellulase F) family.

It is found in the secreted. It catalyses the reaction Endohydrolysis of (1-&gt;4)-beta-D-xylosidic linkages in xylans.. Its pathway is glycan degradation; xylan degradation. Functionally, has xylanase activity. Seems to be involved in the release of sugars from the hemicellulolytic fraction in the compost. The chain is Endo-1,4-beta-xylanase (xlnA) from Agaricus bisporus (White button mushroom).